We begin with the raw amino-acid sequence, 175 residues long: Alkyl hydroperoxide reductase AhpD (175 aa).

The active-site Proton donor is cysteine 131. Residues cysteine 131 and cysteine 134 are joined by a disulfide bond. Catalysis depends on cysteine 134, which acts as the Cysteine sulfenic acid (-SOH) intermediate.

Belongs to the AhpD family.

The catalysed reaction is N(6)-[(R)-dihydrolipoyl]-L-lysyl-[lipoyl-carrier protein] + a hydroperoxide = N(6)-[(R)-lipoyl]-L-lysyl-[lipoyl-carrier protein] + an alcohol + H2O. Functionally, antioxidant protein with alkyl hydroperoxidase activity. Required for the reduction of the AhpC active site cysteine residues and for the regeneration of the AhpC enzyme activity. The polypeptide is Alkyl hydroperoxide reductase AhpD (Brucella melitensis biotype 1 (strain ATCC 23456 / CCUG 17765 / NCTC 10094 / 16M)).